Reading from the N-terminus, the 336-residue chain is Octanoyltransferase (336 aa).

Polar residues predominate over residues 1–16 (MPKSALMSSSFQTSVS). Disordered regions lie at residues 1-22 (MPKS…PLPV) and 48-88 (QGKG…GGGR). The tract at residues 1–92 (MPKSALMSSS…AAGGGRTIRD (92 aa)) is unknown. The interval 93-336 (VKEAAFDVLD…GQEALSVASP (244 aa)) is lipB domain. One can recognise a BPL/LPL catalytic domain in the interval 124-318 (VGGRPTLLLV…AFALTFADYD (195 aa)). Substrate contacts are provided by residues 170-177 (RGGDVTYH), 244-246 (SIG), and 257-259 (GIG). The active-site Acyl-thioester intermediate is the cysteine 275.

It in the C-terminal section; belongs to the LipB family.

Its subcellular location is the cytoplasm. It catalyses the reaction octanoyl-[ACP] + L-lysyl-[protein] = N(6)-octanoyl-L-lysyl-[protein] + holo-[ACP] + H(+). The protein operates within protein modification; protein lipoylation via endogenous pathway; protein N(6)-(lipoyl)lysine from octanoyl-[acyl-carrier-protein]: step 1/2. Its function is as follows. Catalyzes the transfer of endogenously produced octanoic acid from octanoyl-acyl-carrier-protein onto the lipoyl domains of lipoate-dependent enzymes. Lipoyl-ACP can also act as a substrate although octanoyl-ACP is likely to be the physiological substrate. This chain is Octanoyltransferase, found in Deinococcus radiodurans (strain ATCC 13939 / DSM 20539 / JCM 16871 / CCUG 27074 / LMG 4051 / NBRC 15346 / NCIMB 9279 / VKM B-1422 / R1).